The sequence spans 116 residues: Large ribosomal subunit protein bL17 (116 aa).

It belongs to the bacterial ribosomal protein bL17 family. Part of the 50S ribosomal subunit. Contacts protein L32.

The protein is Large ribosomal subunit protein bL17 of Sulfurimonas denitrificans (strain ATCC 33889 / DSM 1251) (Thiomicrospira denitrificans (strain ATCC 33889 / DSM 1251)).